The following is a 116-amino-acid chain: Small ribosomal subunit protein bS16 (116 aa).

Residues 88–116 form a disordered region; that stretch reads RNNPKAAVPGKRMAELAKKKAERAAASAE. Positions 99-110 are enriched in basic and acidic residues; sequence RMAELAKKKAER.

It belongs to the bacterial ribosomal protein bS16 family.

In Cereibacter sphaeroides (strain ATCC 17025 / ATH 2.4.3) (Rhodobacter sphaeroides), this protein is Small ribosomal subunit protein bS16.